Here is a 260-residue protein sequence, read N- to C-terminus: Proteasome subunit alpha type-1 (260 aa).

The tract at residues 240–260 (PRTTGGAAAAAAPGGAEPMQM) is disordered. The span at 244–260 (GGAAAAAAPGGAEPMQM) shows a compositional bias: low complexity.

Belongs to the peptidase T1A family. As to quaternary structure, the 26S proteasome consists of a 20S proteasome core and two 19S regulatory subunits. The 20S proteasome core is composed of 28 subunits that are arranged in four stacked rings, resulting in a barrel-shaped structure. The two end rings are each formed by seven alpha subunits, and the two central rings are each formed by seven beta subunits. The catalytic chamber with the active sites is on the inside of the barrel.

The protein localises to the cytoplasm. It is found in the nucleus. The proteasome is a multicatalytic proteinase complex which is characterized by its ability to cleave peptides with Arg, Phe, Tyr, Leu, and Glu adjacent to the leaving group at neutral or slightly basic pH. The proteasome has an ATP-dependent proteolytic activity. In Caenorhabditis elegans, this protein is Proteasome subunit alpha type-1 (pas-6).